The sequence spans 156 residues: Small ribosomal subunit protein uS7 (156 aa).

Belongs to the universal ribosomal protein uS7 family. As to quaternary structure, part of the 30S ribosomal subunit. Contacts proteins S9 and S11.

Its function is as follows. One of the primary rRNA binding proteins, it binds directly to 16S rRNA where it nucleates assembly of the head domain of the 30S subunit. Is located at the subunit interface close to the decoding center, probably blocks exit of the E-site tRNA. This Streptomyces coelicolor (strain ATCC BAA-471 / A3(2) / M145) protein is Small ribosomal subunit protein uS7 (rspG).